Reading from the N-terminus, the 130-residue chain is Small ribosomal subunit protein uS9 (130 aa).

The tract at residues 107–130 is disordered; it reads DARMKERKKPGLKKARKASQFSKR. The span at 111 to 130 shows a compositional bias: basic residues; sequence KERKKPGLKKARKASQFSKR.

Belongs to the universal ribosomal protein uS9 family.

The chain is Small ribosomal subunit protein uS9 from Ligilactobacillus salivarius (strain UCC118) (Lactobacillus salivarius).